The following is a 373-amino-acid chain: Secondary metabolism regulator laeA (373 aa).

The segment at 55–81 (ERDPAAGRWHANGSPSINSTSSKNPDR) is disordered. A compositionally biased stretch (polar residues) spans 67–77 (GSPSINSTSSK).

It belongs to the methyltransferase superfamily. LaeA methyltransferase family. Component of the heterotrimeric velvet complex composed of laeA, veA and velB; VeA acting as a bridging protein between laeA and velB.

It localises to the nucleus. It catalyses the reaction L-methionyl-[protein] + S-adenosyl-L-methionine = S-methyl-L-methionyl-[protein] + S-adenosyl-L-homocysteine. Functionally, methyltransferase that performs automethylation. No other methyl-accepting substrate has been identified yet. Component of the velvet transcription factor complex that acts as a global regulator for secondary metabolite gene expression. Positively controls expression of 20% to 40% of major classes of secondary metabolite biosynthesis genes such as nonribosomal peptide synthetases, polyketide synthases, and P450 monooxygenases. Controls the expression of the gliotoxin gene cluster. Controls the expression of the fumitremorgin, fumagillin, and pseurotin gene clusters, where genes for fumagillin and pseurotin are physically intertwined in a single supercluster. Regulates the biosynthetic genes required for endocrocin production. Secondary metabolites under the transcriptional regulation of laeA are necessary for inhibition of angiogenesis during invasive infection in mice. Controls the expression of cell surface rodA, a hydrophobin that acts as an antiphagocytic molecule. Also regulates the expression of genes involved in conidial biosynthesis. In Aspergillus fumigatus (strain ATCC MYA-4609 / CBS 101355 / FGSC A1100 / Af293) (Neosartorya fumigata), this protein is Secondary metabolism regulator laeA.